Reading from the N-terminus, the 315-residue chain is Putative HTH-type transcriptional regulatory protein PF1851 (315 aa).

The 59-residue stretch at leucine 131–phenylalanine 189 folds into the HTH cro/C1-type domain. The segment at residues threonine 142–lysine 161 is a DNA-binding region (H-T-H motif).

The polypeptide is Putative HTH-type transcriptional regulatory protein PF1851 (Pyrococcus furiosus (strain ATCC 43587 / DSM 3638 / JCM 8422 / Vc1)).